The sequence spans 261 residues: Transmembrane and immunoglobulin domain-containing protein 1 (261 aa).

Residues 1 to 27 form the signal peptide; the sequence is MAQKTSGLIQRCRFLLLMILFLPHVMT. The region spanning 28-114 is the Ig-like C2-type 1 domain; that stretch reads SSVLSVNGKT…LQRNQSVSIS (87 aa). The Extracellular portion of the chain corresponds to 28-219; sequence SSVLSVNGKT…IVKDKGSTVP (192 aa). A disulfide bridge links Cys-54 with Cys-103. N-linked (GlcNAc...) asparagine glycosylation is found at Asn-83, Asn-108, Asn-118, and Asn-189. The region spanning 122 to 208 is the Ig-like C2-type 2 domain; it reads PPLLSGNDFQ…LIETKTKDFH (87 aa). Residues Cys-143 and Cys-194 are joined by a disulfide bond. Residues 220–240 form a helical membrane-spanning segment; the sequence is IEPIIAACVVVFLTLVFGVIA. Topologically, residues 241 to 261 are cytoplasmic; that stretch reads RRKRIMKLCRKDQGPQCRTAL.

In terms of assembly, homodimer. N-glycosylated.

The protein localises to the cell membrane. The protein resides in the cytoplasm. Functionally, may control cell-cell adhesion, cell migration and proliferation, cell morphology, and protects renal epithelial cells from oxidative cell injury to promote cell survival. The polypeptide is Transmembrane and immunoglobulin domain-containing protein 1 (Bos taurus (Bovine)).